Consider the following 640-residue polypeptide: Chitin elicitor receptor kinase 1 (640 aa).

The first 31 residues, 1–31 (MKFQMKMKSELCRTYKYWLILLVLWLSGVTQ), serve as a signal peptide directing secretion. Topologically, residues 32-248 (RETGVLIVDA…GTVHWRSNVG (217 aa)) are extracellular. 3 disulfides stabilise this stretch: C43–C104, C49–C166, and C102–C164. 3 consecutive LysM domains span residues 53–98 (AYYR…NIYL), 113–160 (FSYT…SLTI), and 179–227 (STYV…KAAN). Chitin is bound by residues 119 to 125 (TNDTAEK) and 148 to 154 (DLSSIYS). The chain crosses the membrane as a helical span at residues 249 to 269 (IIVGVVVGGIVLAVLLLFALI). Over 270–640 (FGFKHFRRRK…SQPPSGNDQL (371 aa)) the chain is Cytoplasmic. The segment at 286–308 (MQQSGLLSSSSMAGSKPSRSGST) is disordered. The span at 289–307 (SGLLSSSSMAGSKPSRSGS) shows a compositional bias: low complexity. Positions 330-612 (FSLAKKIGQG…RFAVVQLMTL (283 aa)) constitute a Protein kinase domain. Residues 336-344 (IGQGGFASV) and K357 each bind ATP. D452 (proton acceptor) is an active-site residue.

This sequence belongs to the protein kinase superfamily. Ser/Thr protein kinase family.

It localises to the cell membrane. The catalysed reaction is L-seryl-[protein] + ATP = O-phospho-L-seryl-[protein] + ADP + H(+). It carries out the reaction L-threonyl-[protein] + ATP = O-phospho-L-threonyl-[protein] + ADP + H(+). Functionally, lysin motif (LysM) receptor kinase required as a cell surface receptor for chitin elicitor (chitooligosaccharides) signaling leading to innate immunity in response to biotic stresses. The CERK1, MEKK1a/b, MKK1a/b/c and MPK4a/b proteins are involved in pathogen defense. The pathway induces rapid growth inhibition, cell wall depositions and accumulation of defense-related transcripts. This protein is required for response to chitin. Is able to complement the A.thaliana cerk1 mutant. This Physcomitrium patens (Spreading-leaved earth moss) protein is Chitin elicitor receptor kinase 1.